A 121-amino-acid chain; its full sequence is MIQRQSYLNVADNSGAKKVQMIGIPYALRQYVSVGDVVTVTVKEATPNGAAKKGKVYRAVVVRVAKELKRSDGSYIKFDDNAVILLNQYGESLGTRILGPIAREVRNRGFTKIASLAAEVV.

The protein belongs to the universal ribosomal protein uL14 family. As to quaternary structure, part of the 50S ribosomal subunit. Forms a cluster with proteins L3 and L19. In the 70S ribosome, L14 and L19 interact and together make contacts with the 16S rRNA in bridges B5 and B8.

Its function is as follows. Binds to 23S rRNA. Forms part of two intersubunit bridges in the 70S ribosome. This is Large ribosomal subunit protein uL14 from Hydrogenobaculum sp. (strain Y04AAS1).